Reading from the N-terminus, the 324-residue chain is Probable nicotianamine synthase 4 (324 aa).

It belongs to the nicotianamine synthase (NAS)-like family.

It catalyses the reaction 3 S-adenosyl-L-methionine = nicotianamine + 3 S-methyl-5'-thioadenosine + 3 H(+). Its function is as follows. Synthesizes nicotianamine, a polyamine which serves as a sensor for the physiological iron status within the plant, and/or might be involved in the transport of iron. This Arabidopsis thaliana (Mouse-ear cress) protein is Probable nicotianamine synthase 4 (NAS4).